The primary structure comprises 72 residues: N-alpha-acetyltransferase 38, NatC auxiliary subunit (72 aa).

The 70-residue stretch at 3 to 72 (NGEILLTSWL…KHIKSFSVRA (70 aa)) folds into the Sm domain.

In terms of assembly, component of the N-terminal acetyltransferase C (NatC) complex, composed of the catalytic subunit Naa30, a large auxiliary subunit Naa35 and a small auxiliary subunit Naa38.

It is found in the endoplasmic reticulum. Functionally, component of the NatC N-terminal acetyltransferase, which associates with the ribosome to acetylate nascent protein chains in a cotranslational manner. NatC acetylates protein N-termini starting with methionine, followed by a hydrophobic or amphipathic amino acid, with amino acids at positions 3 and 4 also contributing to NatC recognition. The first 4 amino acids of cognate substrates are recognized at the Naa30-Naa35 interface. NatC-dependent acetylation targets various substrate proteins to specific subcellular sites. This chain is N-alpha-acetyltransferase 38, NatC auxiliary subunit (naa38), found in Schizosaccharomyces pombe (strain 972 / ATCC 24843) (Fission yeast).